Here is a 734-residue protein sequence, read N- to C-terminus: MNSPQRLSTYWVTCADGLETLLQQELQGLGIEQTERFAGRLIFQGSLEQAYRVCMWSRLASRVLKPIHTFELERTHDARDVAEELYEGALSFDWSLIFAPQSTFAIRLHVEREIKVNSQFATLRVKDGVVDSFMEAVGRRPSIDTKQPEITLFVLAGKTEHTYCLDLSGDSLHKRGYRHYMTDAPIKENLAAAILQKAKLTELKPDLILDPMCGSGTFIIESLMIFTDRAPGLVRRFGFNGWHGHDRELWLELKAEAAERHEIALQNTLPKFYAFDADWEAVKATRQNIIAAGFEKLLDQIQIEERTLADWPSFENTYNTAFVVTNPPYGERLGDKASNRALYLGLSALLQQYFPKQHAAVIAAQIEQADVLAFSEPETLRLMNGKLPIYIRLGQVKPVANSQPFLANWHADPVEIEGAQDFANRLQKNMSALKKWAVKDQVFCLRLYDADLPDFNVAVDLYGDRLHVQEYAPPKTIDPEKAKKRFNLALAAIRAVTGLPREAIFIKTRARQEGKNQYTKQSTASKRFIVQEGQAKILVNLTDYLDTGLFLDHRQIRLRIAQEARGKHFLNLFSYTSTASLHAALGGAASTTSVDLSNTYINWSKENFVLNGLTVDHADEQHMFFASDCFEWLKEGHEQYDLIFIDPPTFSNSKKFYGTFDIQRDHVSLLKRAMNRLSAEGTLYFSNNYRGFELDEEIDAIFYAQEITNDTIGPDFKRNQKIHRAWKIQHPHMN.

One can recognise a THUMP domain in the interval 49–167 (QAYRVCMWSR…KTEHTYCLDL (119 aa)).

It belongs to the methyltransferase superfamily. RlmKL family.

It localises to the cytoplasm. The enzyme catalyses guanosine(2445) in 23S rRNA + S-adenosyl-L-methionine = N(2)-methylguanosine(2445) in 23S rRNA + S-adenosyl-L-homocysteine + H(+). It catalyses the reaction guanosine(2069) in 23S rRNA + S-adenosyl-L-methionine = N(2)-methylguanosine(2069) in 23S rRNA + S-adenosyl-L-homocysteine + H(+). Specifically methylates the guanine in position 2445 (m2G2445) and the guanine in position 2069 (m7G2069) of 23S rRNA. This Acinetobacter baylyi (strain ATCC 33305 / BD413 / ADP1) protein is Ribosomal RNA large subunit methyltransferase K/L.